We begin with the raw amino-acid sequence, 747 residues long: Cyclic di-GMP phosphodiesterase PdeF (747 aa).

Residues 1–14 (MKLNATYIKIRDKW) are Periplasmic-facing. The chain crosses the membrane as a helical span at residues 15 to 36 (WGLPLFLPSLILPIFAHINTFA). Residues 37–42 (HISSGE) lie on the Cytoplasmic side of the membrane. The helical transmembrane segment at 43-65 (VFLFYLPLALMISMMMFFSWAAL) threads the bilayer. At 66–79 (PGIALGIFVRKYAE) the chain is on the periplasmic side. A helical transmembrane segment spans residues 80–102 (LGFYETLSLTANFIIIIILCWGG). The Cytoplasmic portion of the chain corresponds to 103–128 (YRVFTPRRNNVSHGDTRLISQRIFWQ). The chain crosses the membrane as a helical span at residues 129–151 (IVFPATLFLILFQFAAFVGLLAS). At 152 to 165 (RENLVGVMPFNLGT) the chain is on the periplasmic side. The helical transmembrane segment at 166 to 188 (LINYQALLVGNLIGVPLCYFIIR) threads the bilayer. The Cytoplasmic portion of the chain corresponds to 189–215 (VVRNPFYLRSYYSQLKQQVDAKVTKKE). A helical membrane pass occupies residues 216–235 (FALWLLALGALLLLLCMPLN). Residues 236 to 239 (EKST) lie on the Periplasmic side of the membrane. The helical transmembrane segment at 240–259 (IFSTNYTLSLLLPLMMWGAM) threads the bilayer. Over 260-265 (RYGYKL) the chain is Cytoplasmic. The chain crosses the membrane as a helical span at residues 266–285 (ISLLWAVVLMISIHSYQNYI). The Periplasmic portion of the chain corresponds to 286–294 (PIYPGYTTQ). The chain crosses the membrane as a helical span at residues 295–317 (LTITSSSYLVFSFIVNYMAVLAT). The Cytoplasmic portion of the chain corresponds to 318–747 (RQRAVVRRIQ…NEIEPIRESA (430 aa)). Residues 493 to 744 (KVAMMNRLQQ…DTLNEIEPIR (252 aa)) enclose the EAL domain.

Requires Mg(2+) as cofactor. It depends on Mn(2+) as a cofactor.

Its subcellular location is the cell inner membrane. It carries out the reaction 3',3'-c-di-GMP + H2O = 5'-phosphoguanylyl(3'-&gt;5')guanosine + H(+). Its activity is regulated as follows. Inhibited by pGpG. In terms of biological role, phosphodiesterase (PDE) that catalyzes the hydrolysis of cyclic-di-GMP (c-di-GMP) to 5'-pGpG. Truncated proteins consisting of the GGDEF/EAL domains (residues 319-747) or of the EAL domain alone (481-747) have c-di-GMP phosphodiesterase activity. They do not have diguanylate cyclase activity. Cyclic-di-GMP is a second messenger which controls cell surface-associated traits in bacteria. The sequence is that of Cyclic di-GMP phosphodiesterase PdeF from Escherichia coli (strain K12).